Consider the following 356-residue polypeptide: Dihydroorotate dehydrogenase (quinone) (356 aa).

FMN is bound by residues 66–70 and Thr-90; that span reads AGFDK. Lys-70 contacts substrate. Residue 115 to 119 coordinates substrate; that stretch reads NRMGF. Residues Asn-143 and Asn-176 each contribute to the FMN site. Asn-176 lines the substrate pocket. Ser-179 (nucleophile) is an active-site residue. Residue Asn-181 coordinates substrate. Positions 212 and 240 each coordinate FMN. 241–242 is a binding site for substrate; that stretch reads NT. Residues Gly-266, Gly-295, and 316–317 contribute to the FMN site; that span reads YT.

The protein belongs to the dihydroorotate dehydrogenase family. Type 2 subfamily. As to quaternary structure, monomer. FMN serves as cofactor.

The protein localises to the cell membrane. It carries out the reaction (S)-dihydroorotate + a quinone = orotate + a quinol. It participates in pyrimidine metabolism; UMP biosynthesis via de novo pathway; orotate from (S)-dihydroorotate (quinone route): step 1/1. Functionally, catalyzes the conversion of dihydroorotate to orotate with quinone as electron acceptor. This Rhodococcus erythropolis (strain PR4 / NBRC 100887) protein is Dihydroorotate dehydrogenase (quinone).